The chain runs to 1074 residues: Carbamoyl phosphate synthase large chain (1074 aa).

Residues 1–399 (MPKRSDIKKV…ALMKAIRSLD (399 aa)) are carboxyphosphate synthetic domain. ATP contacts are provided by Arg-129, Arg-169, Gly-175, Gly-176, Glu-208, Val-210, Glu-215, Gly-241, Ile-242, His-243, Gln-284, and Glu-296. Residues 133–325 (KKAMERIGEP…IARVTAKIAI (193 aa)) form the ATP-grasp 1 domain. The Mg(2+) site is built by Gln-284, Glu-296, and Asn-298. Residues Gln-284, Glu-296, and Asn-298 each coordinate Mn(2+). An oligomerization domain region spans residues 400–543 (IDIDLGYNGK…YSTYDEECEL (144 aa)). Residues 544–933 (NPSDNKKVLI…FKAEMSAENN (390 aa)) are carbamoyl phosphate synthetic domain. Positions 674–865 (NKLLNKLGIP…LAKIAAKVMA (192 aa)) constitute an ATP-grasp 2 domain. ATP contacts are provided by Arg-710, Asp-749, Leu-751, Glu-756, Gly-781, Ile-782, His-783, Ser-784, Gln-824, and Glu-836. Mg(2+) contacts are provided by Gln-824, Glu-836, and Asn-838. Gln-824, Glu-836, and Asn-838 together coordinate Mn(2+). The MGS-like domain occupies 932-1074 (NNLPLDGIVF…YHREVRYRAL (143 aa)). An allosteric domain region spans residues 934 to 1074 (LPLDGIVFIS…YHREVRYRAL (141 aa)).

It belongs to the CarB family. In terms of assembly, composed of two chains; the small (or glutamine) chain promotes the hydrolysis of glutamine to ammonia, which is used by the large (or ammonia) chain to synthesize carbamoyl phosphate. Tetramer of heterodimers (alpha,beta)4. Mg(2+) serves as cofactor. The cofactor is Mn(2+).

The enzyme catalyses hydrogencarbonate + L-glutamine + 2 ATP + H2O = carbamoyl phosphate + L-glutamate + 2 ADP + phosphate + 2 H(+). It catalyses the reaction hydrogencarbonate + NH4(+) + 2 ATP = carbamoyl phosphate + 2 ADP + phosphate + 2 H(+). It functions in the pathway amino-acid biosynthesis; L-arginine biosynthesis; carbamoyl phosphate from bicarbonate: step 1/1. The protein operates within pyrimidine metabolism; UMP biosynthesis via de novo pathway; (S)-dihydroorotate from bicarbonate: step 1/3. Its function is as follows. Large subunit of the glutamine-dependent carbamoyl phosphate synthetase (CPSase). CPSase catalyzes the formation of carbamoyl phosphate from the ammonia moiety of glutamine, carbonate, and phosphate donated by ATP, constituting the first step of 2 biosynthetic pathways, one leading to arginine and/or urea and the other to pyrimidine nucleotides. The large subunit (synthetase) binds the substrates ammonia (free or transferred from glutamine from the small subunit), hydrogencarbonate and ATP and carries out an ATP-coupled ligase reaction, activating hydrogencarbonate by forming carboxy phosphate which reacts with ammonia to form carbamoyl phosphate. This Methanothrix thermoacetophila (strain DSM 6194 / JCM 14653 / NBRC 101360 / PT) (Methanosaeta thermophila) protein is Carbamoyl phosphate synthase large chain.